The primary structure comprises 521 residues: Phospholipase C B (521 aa).

The tat-type signal signal peptide spans M1–A39. Residues F501 to C521 form a disordered region.

The protein belongs to the bacterial phospholipase C family. Post-translationally, predicted to be exported by the Tat system. The position of the signal peptide cleavage has not been experimentally proven.

Its subcellular location is the secreted. It is found in the cell wall. The enzyme catalyses a 1,2-diacyl-sn-glycero-3-phosphocholine + H2O = phosphocholine + a 1,2-diacyl-sn-glycerol + H(+). Involved in virulence. Induces cytotoxic effects on mouse macrophage cell lines, via direct or indirect enzymatic hydrolysis of cell membrane phospholipids. Hydrolyzes phosphatidylcholine. The chain is Phospholipase C B from Mycobacterium tuberculosis (strain CDC 1551 / Oshkosh).